A 335-amino-acid polypeptide reads, in one-letter code: Galactosylgalactosylxylosylprotein 3-beta-glucuronosyltransferase 3 (335 aa).

Topologically, residues 1–7 (MKLKLKN) are cytoplasmic. A helical; Signal-anchor for type II membrane protein membrane pass occupies residues 8-28 (VFLAYFLVSIAGLLYALVQLG). The Lumenal portion of the chain corresponds to 29–335 (QPCDCLPPLR…GRGSDPAIEV (307 aa)). UDP-alpha-D-glucuronate is bound by residues 82–84 (PTY), aspartate 113, arginine 156, arginine 161, and 194–196 (DDD). Aspartate 196 is a binding site for Mn(2+). The interaction with galactose moiety of substrate glycoprotein stretch occupies residues 243-252 (WEPSRPFPVD). Glutamate 281 acts as the Proton donor/acceptor in catalysis. Asparagine 300 carries an N-linked (GlcNAc...) asparagine glycan. 308 to 310 (HTR) lines the UDP-alpha-D-glucuronate pocket. A compositionally biased stretch (basic and acidic residues) spans 312–322 (EKPKMKQEEQL). The disordered stretch occupies residues 312-335 (EKPKMKQEEQLQRQGRGSDPAIEV).

The protein belongs to the glycosyltransferase 43 family. Homodimer; disulfide-linked. Interacts with PXYLP1; the interaction increases the 2-phosphoxylose phosphatase activity of PXYLP1 during completion of linkage region formation in a B3GAT3-mediated manner. Mn(2+) is required as a cofactor. In terms of processing, N-glycosylated. Ubiquitous (but weakly expressed in all tissues examined).

It is found in the golgi apparatus membrane. Its subcellular location is the golgi apparatus. It localises to the cis-Golgi network. It catalyses the reaction 3-O-(beta-D-galactosyl-(1-&gt;3)-beta-D-galactosyl-(1-&gt;4)-beta-D-xylosyl)-L-seryl-[protein] + UDP-alpha-D-glucuronate = 3-O-(beta-D-GlcA-(1-&gt;3)-beta-D-Gal-(1-&gt;3)-beta-D-Gal-(1-&gt;4)-beta-D-Xyl)-L-seryl-[protein] + UDP + H(+). It functions in the pathway protein modification; protein glycosylation. Its activity is regulated as follows. Inhibited by EDTA. In terms of biological role, glycosaminoglycans biosynthesis. Involved in forming the linkage tetrasaccharide present in heparan sulfate and chondroitin sulfate. Transfers a glucuronic acid moiety from the uridine diphosphate-glucuronic acid (UDP-GlcUA) to the common linkage region trisaccharide Gal-beta-1,3-Gal-beta-1,4-Xyl covalently bound to a Ser residue at the glycosaminylglycan attachment site of proteoglycans. Can also play a role in the biosynthesis of l2/HNK-1 carbohydrate epitope on glycoproteins. Shows strict specificity for Gal-beta-1,3-Gal-beta-1,4-Xyl, exhibiting negligible incorporation into other galactoside substrates including Galbeta1-3Gal beta1-O-benzyl, Galbeta1-4GlcNAc and Galbeta1-4Glc. Stimulates 2-phosphoxylose phosphatase activity of PXYLP1 in presence of uridine diphosphate-glucuronic acid (UDP-GlcUA) during completion of linkage region formation. The protein is Galactosylgalactosylxylosylprotein 3-beta-glucuronosyltransferase 3 (B3GAT3) of Homo sapiens (Human).